Reading from the N-terminus, the 140-residue chain is Small ribosomal subunit protein eS17y (140 aa).

This sequence belongs to the eukaryotic ribosomal protein eS17 family.

This chain is Small ribosomal subunit protein eS17y (RPS17B), found in Arabidopsis thaliana (Mouse-ear cress).